A 557-amino-acid chain; its full sequence is Formate--tetrahydrofolate ligase (557 aa).

66 to 73 (TPAGEGKS) is a binding site for ATP.

Belongs to the formate--tetrahydrofolate ligase family.

The catalysed reaction is (6S)-5,6,7,8-tetrahydrofolate + formate + ATP = (6R)-10-formyltetrahydrofolate + ADP + phosphate. Its pathway is one-carbon metabolism; tetrahydrofolate interconversion. The polypeptide is Formate--tetrahydrofolate ligase (Clostridium botulinum (strain Okra / Type B1)).